Here is a 103-residue protein sequence, read N- to C-terminus: Large ribosomal subunit protein uL23 (103 aa).

The protein belongs to the universal ribosomal protein uL23 family. As to quaternary structure, part of the 50S ribosomal subunit. Contacts protein L29, and trigger factor when it is bound to the ribosome.

Its function is as follows. One of the early assembly proteins it binds 23S rRNA. One of the proteins that surrounds the polypeptide exit tunnel on the outside of the ribosome. Forms the main docking site for trigger factor binding to the ribosome. The chain is Large ribosomal subunit protein uL23 from Aquifex aeolicus (strain VF5).